A 160-amino-acid polypeptide reads, in one-letter code: Protein P5 (160 aa).

A helical transmembrane segment spans residues 7-23 (FLATAAALGVAMFPTQI).

It localises to the virion membrane. The polypeptide is Protein P5 (V) (Pseudoalteromonas espejiana (Bacteriophage PM2)).